The following is a 263-amino-acid chain: N-acyl homoserine lactonase AttM (263 aa).

Zn(2+) is bound by residues H103, H105, D107, H108, H180, D202, and H247.

The protein belongs to the metallo-beta-lactamase superfamily. Zn(2+) serves as cofactor.

The catalysed reaction is an N-acyl-L-homoserine lactone + H2O = an N-acyl-L-homoserine + H(+). This is N-acyl homoserine lactonase AttM from Agrobacterium fabrum (strain C58 / ATCC 33970) (Agrobacterium tumefaciens (strain C58)).